The sequence spans 265 residues: UPF0026 protein slr1464 (265 aa).

A Radical SAM core domain is found at Arg-16–Ala-252. [4Fe-4S] cluster-binding residues include Cys-32, Cys-36, and Cys-39. Residues Arg-204–Pro-230 are disordered.

This sequence belongs to the UPF0026 family. The cofactor is [4Fe-4S] cluster.

The protein is UPF0026 protein slr1464 of Synechocystis sp. (strain ATCC 27184 / PCC 6803 / Kazusa).